Here is a 497-residue protein sequence, read N- to C-terminus: MATAASNPYLPGNSLLAAGSIVHSDAAGAGGGGGGGGGGGGGAGGGGGGMQPGSAAVTSGAYRGDPSSVKMVQSDFMQGAMAASNGGHMLSHAHQWVTALPHAAAAAAAAAAAAVEASSPWSGSAVGMAGSPQQPPRPPPPPPQGPDVKGGVGREDLHAGTALHHRGPPHLGPPPPPPHQGHPGGWGAAAAAAAAAAAAAAAAHLPSMAGGQQPPPQSLLYSQPGGFTVNGMLSAPPGPGGGGGGAGGGAQSLVHPGLVRGDTPELAEHHHHHHHHAHPHPPHPHHAQGPPHHGGGGAGPGLNSHDPHSDEDTPTSDDLEQFAKQFKQRRIKLGFTQADVGLALGTLYGNVFSQTTICRFEALQLSFKNMCKLKPLLNKWLEEADSSTGSPTSIDKIAAQGRKRKKRTSIEVSVKGALESHFLKCPKPSAQEITNLADSLQLEKEVVRVWFCNRRQKEKRMTPPGIQQQTPDDVYSQVGTVSADTPPPHHGLQTSVQ.

Residues glycine 31–glutamine 51 are compositionally biased toward gly residues. Disordered stretches follow at residues glycine 31–tyrosine 62, tryptophan 121–alanine 189, asparagine 230–serine 316, and glutamate 458–glutamine 497. 2 stretches are compositionally biased toward pro residues: residues glutamine 133–glycine 145 and histidine 170–glutamine 180. A compositionally biased stretch (gly residues) spans glycine 240–alanine 250. Residues histidine 269 to histidine 286 show a composition bias toward basic residues. In terms of domain architecture, POU-specific spans glutamate 311 to aspartate 385. A DNA-binding region (homeobox) is located at residues lysine 403–threonine 462. Positions glycine 465–alanine 483 are enriched in polar residues.

It belongs to the POU transcription factor family. Class-3 subfamily. Homodimer. In terms of tissue distribution, brain.

It localises to the nucleus. In terms of biological role, transcription factor that acts synergistically with SOX11 and SOX4. Plays a role in neuronal development. Is implicated in an enhancer activity at the embryonic met-mesencephalic junction; the enhancer element contains the octamer motif (5'-ATTTGCAT-3'). This Rattus norvegicus (Rat) protein is POU domain, class 3, transcription factor 3 (Pou3f3).